Consider the following 138-residue polypeptide: Phosphoribosyl-AMP cyclohydrolase (138 aa).

Residues 1–23 (MSEQSAPSPTPAAELSSDPASPL) form a disordered region. D100 is a Mg(2+) binding site. C101 is a Zn(2+) binding site. The Mg(2+) site is built by D102 and D104. Positions 117 and 124 each coordinate Zn(2+).

Belongs to the PRA-CH family. Homodimer. It depends on Mg(2+) as a cofactor. The cofactor is Zn(2+).

It localises to the cytoplasm. The catalysed reaction is 1-(5-phospho-beta-D-ribosyl)-5'-AMP + H2O = 1-(5-phospho-beta-D-ribosyl)-5-[(5-phospho-beta-D-ribosylamino)methylideneamino]imidazole-4-carboxamide. The protein operates within amino-acid biosynthesis; L-histidine biosynthesis; L-histidine from 5-phospho-alpha-D-ribose 1-diphosphate: step 3/9. In terms of biological role, catalyzes the hydrolysis of the adenine ring of phosphoribosyl-AMP. This chain is Phosphoribosyl-AMP cyclohydrolase, found in Paenarthrobacter aurescens (strain TC1).